The sequence spans 81 residues: Mipartoxin-1 (81 aa).

The signal sequence occupies residues 1 to 21 (MKTLLLTLVVVTIVCLDLGNS). Cystine bridges form between Cys24/Cys42, Cys35/Cys61, Cys65/Cys73, and Cys74/Cys79.

The protein belongs to the three-finger toxin family. Short-chain subfamily. Contains 4 disulfide bonds. As to expression, expressed by the venom gland.

The protein resides in the secreted. Functionally, snake venom neurotoxin that blocks neuromuscular transmission on both avian and mouse nerve-muscle preparations, presenting a postsynaptic action through the nicotinic acetylcholine receptor (nAChR). Reversibly inhibits twitches in mouse phrenic nerve diaphragm and irreversibly in chick biventer cervicis muscle. Has no cytotoxic activity towards C2C12 cells up to 180 ug/ml. In Micrurus mipartitus (Red-tailed coral snake), this protein is Mipartoxin-1.